Here is an 894-residue protein sequence, read N- to C-terminus: Peroxisomal hydratase-dehydrogenase-epimerase (894 aa).

2 short-chain dehydrogenase like regions span residues 6–230 (RFDG…HKNN) and 311–523 (DFKG…CSDK). NADP(+) contacts are provided by Val14, Lys53, Asn99, Arg132, Tyr164, Lys168, and Ala197. Tyr164 (proton acceptor) is an active-site residue. Lys168 (lowers pKa of active site Tyr) is an active-site residue. Tyr458 (proton acceptor) is an active-site residue. 3 residues coordinate (3R)-3-hydroxydecanoyl-CoA: His693, Gly694, and Lys723. The segment at 763–782 (KKPADRGASTAANKPPARSP) is disordered. The 112-residue stretch at 776–887 (KPPARSPDAV…VKETGKLAIS (112 aa)) folds into the MaoC-like domain. (3R)-3-hydroxydecanoyl-CoA-binding residues include Asp803, Asn805, Gly826, Phe851, and Gly853.

This sequence belongs to the short-chain dehydrogenases/reductases (SDR) family. In terms of assembly, monomer.

It is found in the peroxisome. It catalyses the reaction a (3R)-3-hydroxyacyl-CoA = a (2E)-enoyl-CoA + H2O. It carries out the reaction a (3R)-3-hydroxyacyl-CoA + NAD(+) = a 3-oxoacyl-CoA + NADH + H(+). It participates in lipid metabolism; fatty acid beta-oxidation. Functionally, second trifunctional enzyme acting on the beta-oxidation pathway for fatty acids, possessing hydratase-dehydrogenase-epimerase activities. Converts trans-2-enoyl-CoA via D-3-hydroxyacyl-CoA to 3-ketoacyl-CoA. In Neurospora crassa (strain ATCC 24698 / 74-OR23-1A / CBS 708.71 / DSM 1257 / FGSC 987), this protein is Peroxisomal hydratase-dehydrogenase-epimerase (fox-2).